We begin with the raw amino-acid sequence, 424 residues long: Histidine--tRNA ligase (424 aa).

The protein belongs to the class-II aminoacyl-tRNA synthetase family. In terms of assembly, homodimer.

It localises to the cytoplasm. It carries out the reaction tRNA(His) + L-histidine + ATP = L-histidyl-tRNA(His) + AMP + diphosphate + H(+). In Francisella philomiragia subsp. philomiragia (strain ATCC 25017 / CCUG 19701 / FSC 153 / O#319-036), this protein is Histidine--tRNA ligase.